The sequence spans 152 residues: Cell division protein SepF (152 aa).

The protein belongs to the SepF family. As to quaternary structure, homodimer. Interacts with FtsZ.

The protein resides in the cytoplasm. Functionally, cell division protein that is part of the divisome complex and is recruited early to the Z-ring. Probably stimulates Z-ring formation, perhaps through the cross-linking of FtsZ protofilaments. Its function overlaps with FtsA. This chain is Cell division protein SepF, found in Listeria monocytogenes serotype 4b (strain CLIP80459).